Here is a 1664-residue protein sequence, read N- to C-terminus: Peroxisome proliferator-activated receptor gamma coactivator-related protein 1 (1664 aa).

7 disordered regions span residues 1 to 44 (MAAR…GTLG), 167 to 255 (LLTL…VASF), 436 to 555 (PVVP…EGPL), 681 to 701 (VDPV…VSSA), 735 to 793 (IESG…ADIP), 818 to 873 (CLVP…PTPP), and 1045 to 1068 (HGAP…HPKH). The segment covering 12 to 22 (APPPSGGPGPD) has biased composition (pro residues). Gly residues predominate over residues 23–32 (PGGGARGSGW). The span at 201–224 (SLPDPSWDFSPPSFLETSSPKLPS) shows a compositional bias: low complexity. The residue at position 237 (Ser237) is a Phosphoserine. A necessary for interaction with CREB1 and NRF1 and for transcriptional coactivation region spans residues 433–467 (VVEPVVPKEPQNPPANAAPGSQRARKGRKKKSKEQ). A compositionally biased stretch (basic residues) spans 455-464 (RARKGRKKKS). Residues 482–499 (SSRGQSTVGTEVTSQVDN) show a composition bias toward polar residues. The segment covering 522-531 (RAWARAWAAA) has biased composition (low complexity). The span at 533-549 (ENSSPKNLERSAGQSSP) shows a compositional bias: polar residues. A phosphoserine mark is found at Ser536 and Ser548. Residues 823–836 (GPSPASPSPEPPVS) show a composition bias toward pro residues. The span at 862 to 873 (VQSVSPAVPTPP) shows a compositional bias: low complexity. Residue Ser1076 is modified to Phosphoserine. 3 disordered regions span residues 1093-1130 (EEPA…STVP), 1182-1209 (SEAK…DIPQ), and 1334-1528 (VLSL…DHYQ). Over residues 1096–1113 (ASERLKPETQETRPREKP) the composition is skewed to basic and acidic residues. Residues 1365–1383 (PSAPCLAPSSLLSPEASPC) show a composition bias toward low complexity. The interval 1379 to 1450 (EASPCRNDMN…SSSSSSSSSS (72 aa)) is necessary for interaction with CREB1 and NRF1. Residues 1400 to 1409 (RSMRCYRKAC) are compositionally biased toward basic residues. Residues Ser1411 and Ser1413 each carry the phosphoserine modification. Low complexity-rich tracts occupy residues 1427–1459 (SRSV…RSLS) and 1468–1500 (SSCS…SSSR). Residues 1501–1519 (SRSRSPSPRRRSDRRRRYS) show a composition bias toward basic residues. The RRM domain maps to 1543–1619 (RVVFIGKIPG…QPFDLCFGGR (77 aa)).

As to quaternary structure, interacts with CREB1 and NRF1. As to expression, strongly expressed in heart and skeletal muscle, moderately in lung, placenta, intestine, liver, kidney, spleen, thymus, colon and brain. Also expressed in several oncocytic thyroid tumors.

Its subcellular location is the nucleus. Functionally, acts as a coactivator during transcriptional activation of nuclear genes related to mitochondrial biogenesis and cell growth. Involved in the transcription coactivation of CREB and NRF1 target genes. This is Peroxisome proliferator-activated receptor gamma coactivator-related protein 1 (PPRC1) from Homo sapiens (Human).